The primary structure comprises 301 residues: MSATVEFARMNGLGNKILVVDMRGRPDKVTPAAAVALNADPQTEFDQIMAIHDPKADGTDAFIDILNSDGSKAQACGNGTRCVVQALAAETGRKAFTFQTVAGILNAVEHEDGTISVDMGRPVFDWNRIPLAEEFHDTSRIELQIGPIDNPVLHSPSAMSMGNPHAIFWVDRDVMSYDLARFGPLLENHPMFPERANITLAQVTSPTSMTTRTWERGAGLTLACGSAACSAAVSAARTGRTGRKVTINVASAKPPATLSIEWRERDDHVIMTGPAEWEWSGSLDPSTGLWSRDGTQEAGAR.

Residues Asn-15, Gln-47, and Asn-67 each coordinate substrate. Cys-76 functions as the Proton donor in the catalytic mechanism. Substrate-binding positions include 77 to 78 (GN), Asn-163, Asn-197, and 215 to 216 (ER). The active-site Proton acceptor is Cys-224. Substrate is bound at residue 225–226 (GS). Residues 280-301 (SGSLDPSTGLWSRDGTQEAGAR) are disordered.

The protein belongs to the diaminopimelate epimerase family. Homodimer.

It is found in the cytoplasm. It catalyses the reaction (2S,6S)-2,6-diaminopimelate = meso-2,6-diaminopimelate. The protein operates within amino-acid biosynthesis; L-lysine biosynthesis via DAP pathway; DL-2,6-diaminopimelate from LL-2,6-diaminopimelate: step 1/1. Functionally, catalyzes the stereoinversion of LL-2,6-diaminopimelate (L,L-DAP) to meso-diaminopimelate (meso-DAP), a precursor of L-lysine and an essential component of the bacterial peptidoglycan. The protein is Diaminopimelate epimerase of Rhizobium leguminosarum bv. trifolii (strain WSM2304).